The primary structure comprises 351 residues: S-adenosylmethionine:tRNA ribosyltransferase-isomerase (351 aa).

It belongs to the QueA family. In terms of assembly, monomer.

The protein localises to the cytoplasm. The catalysed reaction is 7-aminomethyl-7-carbaguanosine(34) in tRNA + S-adenosyl-L-methionine = epoxyqueuosine(34) in tRNA + adenine + L-methionine + 2 H(+). It participates in tRNA modification; tRNA-queuosine biosynthesis. Functionally, transfers and isomerizes the ribose moiety from AdoMet to the 7-aminomethyl group of 7-deazaguanine (preQ1-tRNA) to give epoxyqueuosine (oQ-tRNA). The protein is S-adenosylmethionine:tRNA ribosyltransferase-isomerase of Photobacterium profundum (strain SS9).